Here is a 207-residue protein sequence, read N- to C-terminus: LexA repressor (207 aa).

Residues 28–48 (RAEIAQKLGFKSANAAEEHLK) constitute a DNA-binding region (H-T-H motif). Catalysis depends on for autocatalytic cleavage activity residues Ser124 and Lys161.

It belongs to the peptidase S24 family. In terms of assembly, homodimer.

It carries out the reaction Hydrolysis of Ala-|-Gly bond in repressor LexA.. Its function is as follows. Represses a number of genes involved in the response to DNA damage (SOS response), including recA and lexA. In the presence of single-stranded DNA, RecA interacts with LexA causing an autocatalytic cleavage which disrupts the DNA-binding part of LexA, leading to derepression of the SOS regulon and eventually DNA repair. This chain is LexA repressor, found in Aeromonas salmonicida (strain A449).